Here is a 348-residue protein sequence, read N- to C-terminus: Dual-specificity RNA methyltransferase RlmN (348 aa).

Glu94 serves as the catalytic Proton acceptor. The Radical SAM core domain maps to 100–330; that stretch reads GKHNWTACIS…TAIIRASRGR (231 aa). Cys107 and Cys336 form a disulfide bridge. Residues Cys114, Cys118, and Cys121 each contribute to the [4Fe-4S] cluster site. Residues 163–164, Ser195, 217–219, and Asn293 each bind S-adenosyl-L-methionine; these read GE and SLN. Cys336 (S-methylcysteine intermediate) is an active-site residue.

This sequence belongs to the radical SAM superfamily. RlmN family. Requires [4Fe-4S] cluster as cofactor.

The protein localises to the cytoplasm. It carries out the reaction adenosine(2503) in 23S rRNA + 2 reduced [2Fe-2S]-[ferredoxin] + 2 S-adenosyl-L-methionine = 2-methyladenosine(2503) in 23S rRNA + 5'-deoxyadenosine + L-methionine + 2 oxidized [2Fe-2S]-[ferredoxin] + S-adenosyl-L-homocysteine. It catalyses the reaction adenosine(37) in tRNA + 2 reduced [2Fe-2S]-[ferredoxin] + 2 S-adenosyl-L-methionine = 2-methyladenosine(37) in tRNA + 5'-deoxyadenosine + L-methionine + 2 oxidized [2Fe-2S]-[ferredoxin] + S-adenosyl-L-homocysteine. In terms of biological role, specifically methylates position 2 of adenine 2503 in 23S rRNA and position 2 of adenine 37 in tRNAs. m2A2503 modification seems to play a crucial role in the proofreading step occurring at the peptidyl transferase center and thus would serve to optimize ribosomal fidelity. In Syntrophus aciditrophicus (strain SB), this protein is Dual-specificity RNA methyltransferase RlmN.